The chain runs to 177 residues: NAD(P)H-quinone oxidoreductase subunit 6, chloroplastic (177 aa).

5 helical membrane-spanning segments follow: residues 10-30 (ILLV…VLLT), 32-52 (PIYS…FYIP), 61-81 (AQLL…VMFM), 92-112 (FWTV…FSLI), and 152-172 (FYLP…GAIA).

Belongs to the complex I subunit 6 family. NDH is composed of at least 16 different subunits, 5 of which are encoded in the nucleus.

Its subcellular location is the plastid. It localises to the chloroplast thylakoid membrane. It catalyses the reaction a plastoquinone + NADH + (n+1) H(+)(in) = a plastoquinol + NAD(+) + n H(+)(out). It carries out the reaction a plastoquinone + NADPH + (n+1) H(+)(in) = a plastoquinol + NADP(+) + n H(+)(out). Functionally, NDH shuttles electrons from NAD(P)H:plastoquinone, via FMN and iron-sulfur (Fe-S) centers, to quinones in the photosynthetic chain and possibly in a chloroplast respiratory chain. The immediate electron acceptor for the enzyme in this species is believed to be plastoquinone. Couples the redox reaction to proton translocation, and thus conserves the redox energy in a proton gradient. This is NAD(P)H-quinone oxidoreductase subunit 6, chloroplastic (ndhG) from Nymphaea alba (White water-lily).